Reading from the N-terminus, the 228-residue chain is Heat shock 70-related protein 4 (228 aa).

The tract at residues 57–80 is disordered; it reads RWHEPPGNTVFDEAHDRPQVRRPD. Positions 68 to 80 are enriched in basic and acidic residues; the sequence is DEAHDRPQVRRPD.

It belongs to the heat shock protein 70 family.

This is Heat shock 70-related protein 4 (HSP70.4) from Leishmania major.